We begin with the raw amino-acid sequence, 477 residues long: RTX-III toxin determinant D (477 aa).

Topologically, residues 1–59 are cytoplasmic; that stretch reads MKLWILGLGEFFQRYRNIWREIWKIRKQLDTPARQKDENEFLPRHLELIETPISKKPRL. Residues 60–77 traverse the membrane as a helical segment; sequence IAYLIMLFLFLAIVISII. Residues 78-477 lie on the Periplasmic side of the membrane; it reads SKVEIVASAT…ESITESLRER (400 aa).

Belongs to the membrane fusion protein (MFP) (TC 8.A.1) family.

The protein resides in the cell inner membrane. Functionally, involved in the transport of the toxin RTX-III. The polypeptide is RTX-III toxin determinant D (apxIIID) (Actinobacillus pleuropneumoniae (Haemophilus pleuropneumoniae)).